Here is a 339-residue protein sequence, read N- to C-terminus: Sperm acrosome membrane-associated protein 6 (339 aa).

Positions 1-41 are cleaved as a signal peptide; the sequence is MTSQRSLSSPQTRRPSVMGLISLVGSIVLLFLLIFRASTWA. Residues 42-45 carry the CXXC motif motif; that stretch reads CLFC. Intrachain disulfides connect C42–C155, C45–C158, C56–C70, C140–C163, C144–C169, and C186–C241. Residues 42–310 are Extracellular-facing; sequence CLFCFTTYEE…NPQALTLGNL (269 aa). Positions 155 to 158 match the CXXC motif motif; the sequence is CSGC. One can recognise an Ig-like domain in the interval 166–251; sequence PLDCPVQDML…VILHDQRPLA (86 aa). N258 is a glycosylation site (N-linked (GlcNAc...) asparagine). The helical transmembrane segment at 311-331 threads the bilayer; sequence FLLAATAALGSASVTLLVWLF. At 332 to 339 the chain is on the cytoplasmic side; sequence FRWYLSGN.

It belongs to the SPACA6 family. As to quaternary structure, forms a complex with IZUMO1 and TMEM81 on spermatocyte cell membrane required for fertilization. As to expression, highly expressed in testis. Minor expression also detected in epididymis, seminal vesicle and ovary. Predominantly expressed in testicular germ cells during spermiogenesis. Most abundant in round spermatids and detected at lower levels in elongating spermatids.

Its subcellular location is the cytoplasmic vesicle. The protein localises to the secretory vesicle. It is found in the acrosome membrane. Sperm protein required for fusion of sperm with the egg membrane during fertilization. May regulate the expression of sperm surface protein DCST2. The sequence is that of Sperm acrosome membrane-associated protein 6 from Mus musculus (Mouse).